Reading from the N-terminus, the 89-residue chain is Small ribosomal subunit protein uS15 (89 aa).

Residues 1 to 21 show a composition bias toward basic and acidic residues; that stretch reads MAISQERKNEIIKEYARHEGD. Positions 1–24 are disordered; sequence MAISQERKNEIIKEYARHEGDTGS.

This sequence belongs to the universal ribosomal protein uS15 family. Part of the 30S ribosomal subunit. Forms a bridge to the 50S subunit in the 70S ribosome, contacting the 23S rRNA.

In terms of biological role, one of the primary rRNA binding proteins, it binds directly to 16S rRNA where it helps nucleate assembly of the platform of the 30S subunit by binding and bridging several RNA helices of the 16S rRNA. Functionally, forms an intersubunit bridge (bridge B4) with the 23S rRNA of the 50S subunit in the ribosome. The protein is Small ribosomal subunit protein uS15 of Enterococcus faecalis (strain ATCC 700802 / V583).